We begin with the raw amino-acid sequence, 675 residues long: Putative L-type lectin-domain containing receptor kinase I.11 (675 aa).

The first 22 residues, Met1–Ser22, serve as a signal peptide directing secretion. The Extracellular portion of the chain corresponds to Gln23–Pro292. The tract at residues Ala27–Ser263 is legume-lectin like. N-linked (GlcNAc...) asparagine glycosylation is found at Asn60, Asn129, Asn186, Asn209, and Asn230. The chain crosses the membrane as a helical span at residues Leu293–Tyr313. Over Leu314 to Arg675 the chain is Cytoplasmic. The 273-residue stretch at Phe348–Leu620 folds into the Protein kinase domain. ATP is bound by residues Leu354 to Val362 and Lys376. The Proton acceptor role is filled by Asp472.

This sequence in the C-terminal section; belongs to the protein kinase superfamily. Ser/Thr protein kinase family. In the N-terminal section; belongs to the leguminous lectin family.

Its subcellular location is the cell membrane. It carries out the reaction L-seryl-[protein] + ATP = O-phospho-L-seryl-[protein] + ADP + H(+). The catalysed reaction is L-threonyl-[protein] + ATP = O-phospho-L-threonyl-[protein] + ADP + H(+). The protein is Putative L-type lectin-domain containing receptor kinase I.11 (LECRK111) of Arabidopsis thaliana (Mouse-ear cress).